The sequence spans 398 residues: uncharacterized protein (398 aa).

An N-terminal signal peptide occupies residues 1–22 (MKLKFYKLPLITTAFSFVFLTA). A lipid anchor (N-palmitoyl cysteine) is attached at Cys-23. Cys-23 carries S-diacylglycerol cysteine lipidation.

The protein resides in the cell membrane. This is an uncharacterized protein from Mycoplasma genitalium (strain ATCC 33530 / DSM 19775 / NCTC 10195 / G37) (Mycoplasmoides genitalium).